We begin with the raw amino-acid sequence, 271 residues long: Aspartate/glutamate leucyltransferase (271 aa).

It belongs to the R-transferase family. Bpt subfamily.

The protein resides in the cytoplasm. The catalysed reaction is N-terminal L-glutamyl-[protein] + L-leucyl-tRNA(Leu) = N-terminal L-leucyl-L-glutamyl-[protein] + tRNA(Leu) + H(+). It catalyses the reaction N-terminal L-aspartyl-[protein] + L-leucyl-tRNA(Leu) = N-terminal L-leucyl-L-aspartyl-[protein] + tRNA(Leu) + H(+). Functions in the N-end rule pathway of protein degradation where it conjugates Leu from its aminoacyl-tRNA to the N-termini of proteins containing an N-terminal aspartate or glutamate. This chain is Aspartate/glutamate leucyltransferase, found in Acinetobacter baylyi (strain ATCC 33305 / BD413 / ADP1).